Here is a 290-residue protein sequence, read N- to C-terminus: ATP synthase gamma chain (290 aa).

It belongs to the ATPase gamma chain family. As to quaternary structure, F-type ATPases have 2 components, CF(1) - the catalytic core - and CF(0) - the membrane proton channel. CF(1) has five subunits: alpha(3), beta(3), gamma(1), delta(1), epsilon(1). CF(0) has three main subunits: a, b and c.

It is found in the cell membrane. Produces ATP from ADP in the presence of a proton gradient across the membrane. The gamma chain is believed to be important in regulating ATPase activity and the flow of protons through the CF(0) complex. The polypeptide is ATP synthase gamma chain (Buchnera aphidicola subsp. Diuraphis noxia).